Here is a 114-residue protein sequence, read N- to C-terminus: Tyrosine-protein phosphatase 11 (114 aa).

In terms of domain architecture, Tyrosine-protein phosphatase spans 1-114; that stretch reads WRMIWEHNTR…EAKHTGPTIV (114 aa). Asp-81 is a substrate binding site.

It belongs to the protein-tyrosine phosphatase family.

The enzyme catalyses O-phospho-L-tyrosyl-[protein] + H2O = L-tyrosyl-[protein] + phosphate. The chain is Tyrosine-protein phosphatase 11 (STY-11) from Styela plicata (Wrinkled sea squirt).